The sequence spans 179 residues: Adenine phosphoribosyltransferase (179 aa).

The protein belongs to the purine/pyrimidine phosphoribosyltransferase family. Homodimer.

The protein resides in the cytoplasm. The catalysed reaction is AMP + diphosphate = 5-phospho-alpha-D-ribose 1-diphosphate + adenine. It participates in purine metabolism; AMP biosynthesis via salvage pathway; AMP from adenine: step 1/1. Its function is as follows. Catalyzes a salvage reaction resulting in the formation of AMP, that is energically less costly than de novo synthesis. This is Adenine phosphoribosyltransferase from Bradyrhizobium sp. (strain BTAi1 / ATCC BAA-1182).